Reading from the N-terminus, the 551-residue chain is Sialic acid-binding Ig-like lectin 5 (551 aa).

The signal sequence occupies residues 1–16 (MLPLLLLPLLWGGSLQ). The Extracellular segment spans residues 17-441 (EKPVYELQVQ…LGTGVVPAAL (425 aa)). Positions 19 to 136 (PVYELQVQKS…KYSYQQNKLN (118 aa)) constitute an Ig-like V-type domain. 3 disulfides stabilise this stretch: cysteine 36–cysteine 170, cysteine 41–cysteine 101, and cysteine 164–cysteine 213. Asparagine 100 carries an N-linked (GlcNAc...) asparagine glycan. N-acetylneuraminate contacts are provided by arginine 119, lysine 127, and serine 129. The 84-residue stretch at 146–229 (PDIHFLEPLE…AQVTTERTVQ (84 aa)) folds into the Ig-like C2-type 1 domain. The segment at 189 to 210 (DPETTRSSELTLTPRPEDHGTN) is disordered. 3 N-linked (GlcNAc...) asparagine glycosylation sites follow: asparagine 210, asparagine 231, and asparagine 253. Residues 236–330 (PQTITIFRNG…GFLQIFLNLS (95 aa)) form the Ig-like C2-type 2 domain. Cysteine 269 and cysteine 314 are oxidised to a cystine. N-linked (GlcNAc...) asparagine glycans are attached at residues asparagine 328, asparagine 375, asparagine 384, and asparagine 393. The helical transmembrane segment at 442–462 (GGAGVMALLCICLCLIFFLIV) threads the bilayer. The Cytoplasmic segment spans residues 463-551 (KARRKQAAGR…TEYSEIKTSK (89 aa)). Residues 469-551 (AAGRPEKMDD…TEYSEIKTSK (83 aa)) are disordered. The ITIM motif signature appears at 518–523 (LHYASL). The segment covering 528-537 (MKSREPKDQE) has biased composition (basic and acidic residues). An SLAM-like motif motif is present at residues 542 to 547 (TEYSEI).

This sequence belongs to the immunoglobulin superfamily. SIGLEC (sialic acid binding Ig-like lectin) family. In terms of tissue distribution, expressed by monocytic/myeloid lineage cells. Found at high levels in peripheral blood leukocytes, spleen, bone marrow and at lower levels in lymph node, lung, appendix, placenta, pancreas and thymus. Expressed by monocytes and neutrophils but absent from leukemic cell lines representing early stages of myelomonocytic differentiation.

It is found in the membrane. Putative adhesion molecule that mediates sialic-acid dependent binding to cells. Binds equally to alpha-2,3-linked and alpha-2,6-linked sialic acid. The sialic acid recognition site may be masked by cis interactions with sialic acids on the same cell surface. The protein is Sialic acid-binding Ig-like lectin 5 (SIGLEC5) of Homo sapiens (Human).